We begin with the raw amino-acid sequence, 912 residues long: LPS-assembly protein LptD (912 aa).

The first 27 residues, methionine 1–alanine 27, serve as a signal peptide directing secretion.

Belongs to the LptD family. Component of the lipopolysaccharide transport and assembly complex. Interacts with LptE and LptA.

Its subcellular location is the cell outer membrane. Functionally, together with LptE, is involved in the assembly of lipopolysaccharide (LPS) at the surface of the outer membrane. This Psychrobacter arcticus (strain DSM 17307 / VKM B-2377 / 273-4) protein is LPS-assembly protein LptD.